Here is a 470-residue protein sequence, read N- to C-terminus: Cysteine--tRNA ligase (470 aa).

C31 is a Zn(2+) binding site. Residues 33 to 43 (PTVYDYVHIGH) carry the 'HIGH' region motif. Zn(2+)-binding residues include C209, H234, and E238. The 'KMSKS' region motif lies at 266–270 (KMSKS). K269 contacts ATP.

It belongs to the class-I aminoacyl-tRNA synthetase family. Zn(2+) is required as a cofactor.

Its subcellular location is the cytoplasm. It catalyses the reaction tRNA(Cys) + L-cysteine + ATP = L-cysteinyl-tRNA(Cys) + AMP + diphosphate. The polypeptide is Cysteine--tRNA ligase (Saccharolobus solfataricus (strain ATCC 35092 / DSM 1617 / JCM 11322 / P2) (Sulfolobus solfataricus)).